The sequence spans 196 residues: ATP-dependent Clp protease proteolytic subunit (196 aa).

Catalysis depends on S101, which acts as the Nucleophile. H126 is a catalytic residue.

It belongs to the peptidase S14 family. As to quaternary structure, component of the chloroplastic Clp protease core complex.

The protein resides in the plastid. It is found in the chloroplast stroma. The catalysed reaction is Hydrolysis of proteins to small peptides in the presence of ATP and magnesium. alpha-casein is the usual test substrate. In the absence of ATP, only oligopeptides shorter than five residues are hydrolyzed (such as succinyl-Leu-Tyr-|-NHMec, and Leu-Tyr-Leu-|-Tyr-Trp, in which cleavage of the -Tyr-|-Leu- and -Tyr-|-Trp bonds also occurs).. Functionally, cleaves peptides in various proteins in a process that requires ATP hydrolysis. Has a chymotrypsin-like activity. Plays a major role in the degradation of misfolded proteins. The sequence is that of ATP-dependent Clp protease proteolytic subunit from Nicotiana tabacum (Common tobacco).